Here is a 325-residue protein sequence, read N- to C-terminus: Biotin synthase (325 aa).

Residues 52–281 (YQKDDVVLCS…AKPLLICGGR (230 aa)) form the Radical SAM core domain. [4Fe-4S] cluster is bound by residues Cys70, Cys74, and Cys77. Residues Ser114, Cys146, and Cys206 each coordinate [2Fe-2S] cluster.

This sequence belongs to the radical SAM superfamily. Biotin synthase family. Homodimer. Requires [4Fe-4S] cluster as cofactor. The cofactor is [2Fe-2S] cluster.

It carries out the reaction (4R,5S)-dethiobiotin + (sulfur carrier)-SH + 2 reduced [2Fe-2S]-[ferredoxin] + 2 S-adenosyl-L-methionine = (sulfur carrier)-H + biotin + 2 5'-deoxyadenosine + 2 L-methionine + 2 oxidized [2Fe-2S]-[ferredoxin]. It functions in the pathway cofactor biosynthesis; biotin biosynthesis; biotin from 7,8-diaminononanoate: step 2/2. Functionally, catalyzes the conversion of dethiobiotin (DTB) to biotin by the insertion of a sulfur atom into dethiobiotin via a radical-based mechanism. In Syntrophus aciditrophicus (strain SB), this protein is Biotin synthase.